The chain runs to 643 residues: Major core protein OPG129 (643 aa).

Positions 1–61 (MEAVVNSDVF…IVDDDFISAG (61 aa)) are excised as a propeptide.

Belongs to the orthopoxvirus OPG129 family. Post-translationally, the 73-kDa precursor is cleaved to a mature protein of 60 kDa during virion maturation. Proteolytic cleavage of major core proteins OPG129, OPG136, and OPG098, which occurs at a late stage of core formation, is required for production of infectious mature virions (MV).

It localises to the virion. Functionally, major component of the virion core that undergoes proteolytic processing during the immature virion (IV) to mature virion (MV) transition. Essential for the formation of a structurally normal core. The protein is Major core protein OPG129 (OPG129) of Vaccinia virus (strain Western Reserve) (VACV).